A 359-amino-acid polypeptide reads, in one-letter code: MKAPTQNDPQTRRPAAFTLETEEAARPSATQKRAPRSFDAEISLTPDEDDPFLAPADIDAAALPVATPKKSRFSFGKLGLGALGVLFSLAFGLWADQLIRNLFSRSDWLGYTATIALIVALFAVLALVGREVFGIMRLNAVQSLKADAETASLDKSPKPARAIVTRLNAVLSHRAETAKGRAALKETENDVIDGPHLIELAERELLVPLDRQARALILNSSKRVSVVTAVSPRAVVDLAYVLFEVTRLVRAMAELYGGRPGTLGMLKLLRDVVAHLAVTGSIAVGDGLAQQVLGHGLASKLSARLGEGVINGLMTARIGIAAMDLCRPLPFRAVKRPGIGDFMSDLTPDLSGGKNGEKA.

Residues 1–39 (MKAPTQNDPQTRRPAAFTLETEEAARPSATQKRAPRSFD) form a disordered region. 2 helical membrane-spanning segments follow: residues 75 to 95 (FGKL…GLWA) and 108 to 128 (WLGY…LALV).

Belongs to the UPF0283 family.

It localises to the cell inner membrane. The protein is UPF0283 membrane protein Atu1356 of Agrobacterium fabrum (strain C58 / ATCC 33970) (Agrobacterium tumefaciens (strain C58)).